The sequence spans 230 residues: MKITKNILKAEFIKRPNRFQAYVKINEKIEMVHVPNTGRCKEILIPGSMVILREENNENRKTRYDLIAGYKGDMLINIDSQIPNKVVHEALMNLKIDILKEYTNIKREKTFGKSRFDFKLEKENGEIYYLEVKGVTLENDGLTMFPDAPTERGTKHILELIDVKNKGMGAGVLFLIQLNGVKKFTPHHKMDKNFGEALRLAKEKGVDILAYDCLVEESSISLNNPISIEI.

The protein belongs to the SfsA family.

The protein is Sugar fermentation stimulation protein homolog of Clostridium botulinum (strain ATCC 19397 / Type A).